Consider the following 251-residue polypeptide: Triosephosphate isomerase (251 aa).

Position 9 to 11 (9 to 11) interacts with substrate; it reads NWK. His-94 acts as the Electrophile in catalysis. The active-site Proton acceptor is the Glu-166. Substrate contacts are provided by residues Gly-172, Ser-211, and 232–233; that span reads GG.

The protein belongs to the triosephosphate isomerase family. As to quaternary structure, homodimer.

The protein localises to the cytoplasm. The enzyme catalyses D-glyceraldehyde 3-phosphate = dihydroxyacetone phosphate. It participates in carbohydrate biosynthesis; gluconeogenesis. It functions in the pathway carbohydrate degradation; glycolysis; D-glyceraldehyde 3-phosphate from glycerone phosphate: step 1/1. Its function is as follows. Involved in the gluconeogenesis. Catalyzes stereospecifically the conversion of dihydroxyacetone phosphate (DHAP) to D-glyceraldehyde-3-phosphate (G3P). The polypeptide is Triosephosphate isomerase (Stenotrophomonas maltophilia (strain R551-3)).